Consider the following 580-residue polypeptide: MAEGGFGADSVGRGGEKASVTRGGRWDLGSSDDESSTSTTSTDMDDLPEERKPLTGKSVKTSYIYDVPTVPTSKPWHLMHDNSLYATPRFPPRPLIRHPSEKGSIFASRLSATDDDSGDYAPMDRFAFQSPRVCGRPPLPPPNHPPPATRPADASMGDVGWADLQGLKRTPKGFLKTSTKGGSLKARGRDVGDRLRDGGFAFSPRGVKSAIGQNIKSWLGIGESSATAVPVTTQLMVPVHLIRTPVTVDYRNVYLLYLEGVMGVGKSTLVNAVCGILPQERVTSFPEPMVYWTRAFTDCYKEISHLMKSGKAGDPLTSAKIYSCQNKFSLPFRTNATAILRMMQPWNVGGGSGRGTHWCVFDRHLLSPAVVFPLMHLKHGRLSFDHFFQLLSIFRATEGDVVAILTLSSAESLRRVRARGRKNDGTVEQNYIRELAWAYHAVYCSWIMLQYITVEQMVQLCVQTTNIPEICFRSVRLAHKEETLKNLHEQSMLPMITGVLDPVRHHPVVIELCFCFFTELRKLQFIVADADKFHDDVCGLWTEIYRQILSNPAIKPRAINWPALESQSKAVNHLEETCRV.

Disordered regions lie at residues 1 to 60 (MAEG…KSVK) and 133 to 157 (VCGR…ASMG). Pro residues predominate over residues 137–149 (PPLPPPNHPPPAT). Residue 260–267 (GVMGVGKS) participates in ATP binding. The active-site Proton acceptor is glutamate 287. Glutamine 325 is a binding site for substrate. Arginine 415 serves as a coordination point for ATP. Residue arginine 421 participates in substrate binding.

This sequence belongs to the herpesviridae thymidine kinase family. In terms of assembly, homodimer.

The catalysed reaction is thymidine + ATP = dTMP + ADP + H(+). Catalyzes the transfer of the gamma-phospho group of ATP to thymidine to generate dTMP in the salvage pathway of pyrimidine synthesis. The dTMP serves as a substrate for DNA polymerase during viral DNA replication. Allows the virus to be reactivated and to grow in non-proliferative cells lacking a high concentration of phosphorylated nucleic acid precursors. This Human herpesvirus 8 type P (isolate GK18) (HHV-8) protein is Thymidine kinase.